The sequence spans 88 residues: Small ribosomal subunit protein uS17 (88 aa).

Belongs to the universal ribosomal protein uS17 family. Part of the 30S ribosomal subunit.

Functionally, one of the primary rRNA binding proteins, it binds specifically to the 5'-end of 16S ribosomal RNA. This is Small ribosomal subunit protein uS17 from Maridesulfovibrio salexigens (strain ATCC 14822 / DSM 2638 / NCIMB 8403 / VKM B-1763) (Desulfovibrio salexigens).